The sequence spans 612 residues: Chaperone protein DnaK (612 aa).

Residue T174 is modified to Phosphothreonine; by autocatalysis. Positions 578–612 (GGQTGGATNTDSAGQGTTQDNVYEANYKVEDDDNK) are disordered. The segment covering 586–598 (NTDSAGQGTTQDN) has biased composition (polar residues).

Belongs to the heat shock protein 70 family.

Functionally, acts as a chaperone. The protein is Chaperone protein DnaK of Thermoanaerobacter sp. (strain X514).